The chain runs to 398 residues: Phosphoglycerate kinase (398 aa).

Residues 23–25 (DFN), Arg-38, 61–64 (HMGK), Arg-122, and Arg-155 contribute to the substrate site. Residues Lys-206, Gly-297, Glu-328, and 354-357 (GGDS) each bind ATP.

This sequence belongs to the phosphoglycerate kinase family. As to quaternary structure, monomer.

It localises to the cytoplasm. The enzyme catalyses (2R)-3-phosphoglycerate + ATP = (2R)-3-phospho-glyceroyl phosphate + ADP. It participates in carbohydrate degradation; glycolysis; pyruvate from D-glyceraldehyde 3-phosphate: step 2/5. In Clostridium botulinum (strain Okra / Type B1), this protein is Phosphoglycerate kinase.